Reading from the N-terminus, the 210-residue chain is dTTP/UTP pyrophosphatase (210 aa).

Catalysis depends on Asp89, which acts as the Proton acceptor.

This sequence belongs to the Maf family. YhdE subfamily. Requires a divalent metal cation as cofactor.

It is found in the cytoplasm. The enzyme catalyses dTTP + H2O = dTMP + diphosphate + H(+). It carries out the reaction UTP + H2O = UMP + diphosphate + H(+). Its function is as follows. Nucleoside triphosphate pyrophosphatase that hydrolyzes dTTP and UTP. May have a dual role in cell division arrest and in preventing the incorporation of modified nucleotides into cellular nucleic acids. In Burkholderia orbicola (strain AU 1054), this protein is dTTP/UTP pyrophosphatase.